The chain runs to 1486 residues: Chromosome partition protein MukB (1486 aa).

34-41 (GGNGAGKS) is an ATP binding site. Coiled coils occupy residues 326–418 (LEAD…QYNQ), 444–480 (LETF…QAYQ), and 509–603 (RHLA…RAPV). Residues 666 to 783 (PGGSEDQRLN…EVPLFGRAAR (118 aa)) are flexible hinge. 3 coiled-coil regions span residues 835–923 (EAEI…AKLE), 977–1115 (EMLS…TAKA), and 1209–1266 (VEAI…QNVS).

Belongs to the SMC family. MukB subfamily. As to quaternary structure, homodimerization via its hinge domain. Binds to DNA via its C-terminal region. Interacts, and probably forms a ternary complex, with MukE and MukF via its C-terminal region. The complex formation is stimulated by calcium or magnesium. Interacts with tubulin-related protein FtsZ.

The protein resides in the cytoplasm. It localises to the nucleoid. Plays a central role in chromosome condensation, segregation and cell cycle progression. Functions as a homodimer, which is essential for chromosome partition. Involved in negative DNA supercoiling in vivo, and by this means organize and compact chromosomes. May achieve or facilitate chromosome segregation by condensation DNA from both sides of a centrally located replisome during cell division. In Escherichia coli (strain ATCC 8739 / DSM 1576 / NBRC 3972 / NCIMB 8545 / WDCM 00012 / Crooks), this protein is Chromosome partition protein MukB.